The chain runs to 408 residues: Aminomethyltransferase, mitochondrial (408 aa).

Residues 1-30 (MRGGLWQLGQSITRRLANGGDKKAVARRCF) constitute a mitochondrion transit peptide. The substrate site is built by Glu-235, Arg-266, and Tyr-404.

It belongs to the GcvT family. In terms of assembly, the glycine cleavage system is composed of four proteins: P, T, L and H.

The protein localises to the mitochondrion. It carries out the reaction N(6)-[(R)-S(8)-aminomethyldihydrolipoyl]-L-lysyl-[protein] + (6S)-5,6,7,8-tetrahydrofolate = N(6)-[(R)-dihydrolipoyl]-L-lysyl-[protein] + (6R)-5,10-methylene-5,6,7,8-tetrahydrofolate + NH4(+). In terms of biological role, the glycine cleavage system catalyzes the degradation of glycine. This Pisum sativum (Garden pea) protein is Aminomethyltransferase, mitochondrial (GDCST).